We begin with the raw amino-acid sequence, 351 residues long: Serine protease inhibitor dipetalogastin (351 aa).

Positions 1–131 (LIKELVNMVI…AETTNAMEVL (131 aa)) are excised as a propeptide. 6 consecutive Kazal-like domains span residues 19-69 (KELK…PCDE), 72-122 (HDFE…ECHA), 131-181 (LFQG…PCDE), 184-234 (HDFE…ECHP), 240-289 (QLIL…ECKV), and 297-347 (GEVR…RCLP). Cystine bridges form between cysteine 25/cysteine 50, cysteine 27/cysteine 46, cysteine 35/cysteine 67, cysteine 78/cysteine 103, cysteine 80/cysteine 99, cysteine 88/cysteine 120, cysteine 137/cysteine 162, cysteine 139/cysteine 158, cysteine 147/cysteine 179, cysteine 190/cysteine 215, cysteine 192/cysteine 211, cysteine 200/cysteine 232, cysteine 246/cysteine 271, cysteine 248/cysteine 267, cysteine 256/cysteine 287, cysteine 303/cysteine 328, cysteine 305/cysteine 324, and cysteine 313/cysteine 345.

It is found in the secreted. In terms of biological role, thrombin inhibitor. Prevents blood clotting to allow insect to feed on blood. Also functions as an inhibitor of trypsin and plasmin. This chain is Serine protease inhibitor dipetalogastin, found in Dipetalogaster maximus (Blood-sucking bug).